A 137-amino-acid chain; its full sequence is Large ribosomal subunit protein mL41 (137 aa).

The N-terminal 13 residues, 1 to 13, are a transit peptide targeting the mitochondrion; sequence MGVLAAAARCLVR.

It belongs to the mitochondrion-specific ribosomal protein mL41 family. Component of the mitochondrial large ribosomal subunit (mt-LSU). Mature mammalian 55S mitochondrial ribosomes consist of a small (28S) and a large (39S) subunit. The 28S small subunit contains a 12S ribosomal RNA (12S mt-rRNA) and 30 different proteins. The 39S large subunit contains a 16S rRNA (16S mt-rRNA), a copy of mitochondrial valine transfer RNA (mt-tRNA(Val)), which plays an integral structural role, and 52 different proteins. Interacts with BCL2. Present in kidney, liver, thymus and testis, and at lower level in brain and spleen (at protein level).

It localises to the mitochondrion. Functionally, component of the mitochondrial ribosome large subunit. Also involved in apoptosis and cell cycle. Enhances p53/TP53 stability, thereby contributing to p53/TP53-induced apoptosis in response to growth-inhibitory condition. Enhances p53/TP53 translocation to the mitochondria. Has the ability to arrest the cell cycle at the G1 phase, possibly by stabilizing the CDKN1A and CDKN1B (p27Kip1) proteins. The protein is Large ribosomal subunit protein mL41 (MRPL41) of Homo sapiens (Human).